The following is a 163-amino-acid chain: Lipoprotein signal peptidase (163 aa).

The next 4 helical transmembrane spans lie at 9 to 29 (YLAI…SALS), 39 to 59 (VLPF…SFLA), 67 to 87 (WFFT…LYKS), and 92 to 112 (LLCI…LDRV). Active-site residues include D119 and D137. Residues 130 to 150 (WPAFNIADSAICVGAALIIWG) form a helical membrane-spanning segment.

This sequence belongs to the peptidase A8 family.

It localises to the cell inner membrane. The enzyme catalyses Release of signal peptides from bacterial membrane prolipoproteins. Hydrolyzes -Xaa-Yaa-Zaa-|-(S,diacylglyceryl)Cys-, in which Xaa is hydrophobic (preferably Leu), and Yaa (Ala or Ser) and Zaa (Gly or Ala) have small, neutral side chains.. It participates in protein modification; lipoprotein biosynthesis (signal peptide cleavage). Its function is as follows. This protein specifically catalyzes the removal of signal peptides from prolipoproteins. The polypeptide is Lipoprotein signal peptidase (Polynucleobacter necessarius subsp. necessarius (strain STIR1)).